Reading from the N-terminus, the 101-residue chain is Small ribosomal subunit protein bS18c (101 aa).

This sequence belongs to the bacterial ribosomal protein bS18 family. As to quaternary structure, part of the 30S ribosomal subunit.

It localises to the plastid. The protein resides in the chloroplast. This Nymphaea alba (White water-lily) protein is Small ribosomal subunit protein bS18c.